We begin with the raw amino-acid sequence, 218 residues long: Small ribosomal subunit protein uS3c (218 aa).

In terms of domain architecture, KH type-2 spans 47–118 (VQKNMRTSSG…KLNIAVTRIA (72 aa)).

Belongs to the universal ribosomal protein uS3 family. In terms of assembly, part of the 30S ribosomal subunit.

The protein localises to the plastid. It localises to the chloroplast. The protein is Small ribosomal subunit protein uS3c (rps3) of Solanum lycopersicum (Tomato).